A 361-amino-acid polypeptide reads, in one-letter code: Dual specificity mitogen-activated protein kinase kinase 6 (361 aa).

Basic and acidic residues-rich tracts occupy residues Met-1–Val-11 and Pro-37–Glu-48. Residues Met-1–Asp-61 are disordered. The interval Val-30–Val-46 is d domain. Residues Leu-80–Phe-341 enclose the Protein kinase domain. ATP contacts are provided by residues Leu-86–Val-94 and Lys-109. Residue Asp-206 is the Proton acceptor of the active site. At Ser-234 the chain carries Phosphoserine; by MAPK3. A Phosphothreonine; by MAPK3 modification is found at Thr-238. Residues His-338–Asp-361 form a DVD domain region.

This sequence belongs to the protein kinase superfamily. STE Ser/Thr protein kinase family. MAP kinase kinase subfamily. Dimer. Interacts (via its D domain) with its MAP kinase substrates. Interacts (via its DVD domain) with MAP3Ks activators. Post-translationally, weakly autophosphorylated. Phosphorylated at Ser-234 and Thr-238 by the majority of M3Ks.

It is found in the nucleus. The protein localises to the cytoplasm. The protein resides in the cytoskeleton. It carries out the reaction L-seryl-[protein] + ATP = O-phospho-L-seryl-[protein] + ADP + H(+). The enzyme catalyses L-threonyl-[protein] + ATP = O-phospho-L-threonyl-[protein] + ADP + H(+). The catalysed reaction is L-tyrosyl-[protein] + ATP = O-phospho-L-tyrosyl-[protein] + ADP + H(+). Activated by dual phosphorylation on Ser-234 and Thr-238 in response to a variety of cellular stresses, including UV radiation, osmotic shock, hypoxia, inflammatory cytokines, interferon gamma (IFNG), and less often by growth factors. MAP2K6/MKK6 is activated by the majority of M3Ks. Its function is as follows. Dual specificity protein kinase which acts as an essential component of the MAP kinase signal transduction pathway. Catalyzes the concomitant phosphorylation of a threonine and a tyrosine residue in the MAP kinases p38 and plays an important role in the regulation of cellular responses to cytokines and all kinds of stresses. The p38 MAP kinase signal transduction pathway leads to direct activation of transcription factors. Phosphorylation by MAP2K6 asymmetrically activates p38 on one side of the blastodisc, an event which is necessary for blastomere cleavage. The sequence is that of Dual specificity mitogen-activated protein kinase kinase 6 from Danio rerio (Zebrafish).